A 410-amino-acid polypeptide reads, in one-letter code: Neuroserpin (410 aa).

The signal sequence occupies residues 1–16 (MAFLGLFSLLVLQSMA). Asparagine 157, asparagine 321, and asparagine 401 each carry an N-linked (GlcNAc...) asparagine glycan. Serine 403 carries an O-linked (Xyl...) (chondroitin sulfate) serine glycan.

This sequence belongs to the serpin family. In terms of assembly, monomer. Has a tendency to form large polymers already at 41 and 45 degrees Celsius (in vitro). Detected in brain cortex and hippocampus pyramidal neurons (at protein level). Detected in cerebrospinal fluid (at protein level). Predominantly expressed in the brain.

It localises to the secreted. The protein localises to the cytoplasmic vesicle. The protein resides in the secretory vesicle lumen. It is found in the perikaryon. In terms of biological role, serine protease inhibitor that inhibits plasminogen activators and plasmin but not thrombin. May be involved in the formation or reorganization of synaptic connections as well as for synaptic plasticity in the adult nervous system. May protect neurons from cell damage by tissue-type plasminogen activator. This Homo sapiens (Human) protein is Neuroserpin (SERPINI1).